The sequence spans 71 residues: Exodeoxyribonuclease 7 small subunit (71 aa).

It belongs to the XseB family. Heterooligomer composed of large and small subunits.

Its subcellular location is the cytoplasm. It carries out the reaction Exonucleolytic cleavage in either 5'- to 3'- or 3'- to 5'-direction to yield nucleoside 5'-phosphates.. Its function is as follows. Bidirectionally degrades single-stranded DNA into large acid-insoluble oligonucleotides, which are then degraded further into small acid-soluble oligonucleotides. The protein is Exodeoxyribonuclease 7 small subunit of Streptococcus thermophilus (strain ATCC BAA-250 / LMG 18311).